The chain runs to 188 residues: RxLR effector protein Avh241 (188 aa).

The N-terminal stretch at 1–16 (MRQYCLLLIVLALAAA) is a signal peptide. Residues 43-58 (RLLRSEPQDEDTFEDR) carry the RxLR-dEER motif. The short motif at 73–78 (GAAKAK) is the Host plasma membrane localization motif element.

The protein belongs to the RxLR effector family.

The protein localises to the secreted. It localises to the host cell membrane. Effector that triggers cell death in a variety of plant species (including tobacco, tomato and soybean), regardless of the Rps genes present. Avh241 interacts with the plant immune system via at least two different mechanisms, one recognized by plants dependent on subcellular localization and one promoting infection independent on membrane localization. The cell death triggered by Avh241 in N.benthamiana requires the two host mitogen-activated protein kinases, MEK2 and WIPK. The polypeptide is RxLR effector protein Avh241 (Phytophthora sojae (strain P6497) (Soybean stem and root rot agent)).